A 669-amino-acid polypeptide reads, in one-letter code: Dymeclin (669 aa).

Gly2 is lipidated: N-myristoyl glycine.

The protein belongs to the dymeclin family. As to quaternary structure, interacts with GOLM1 and PPIB. Post-translationally, myristoylated in vitro; myristoylation is not essential for protein targeting to Golgi compartment.

Its subcellular location is the cytoplasm. The protein localises to the golgi apparatus. The protein resides in the membrane. In terms of biological role, necessary for correct organization of Golgi apparatus. Involved in bone development. In Pongo abelii (Sumatran orangutan), this protein is Dymeclin (DYM).